The following is a 631-amino-acid chain: Anthrax toxin receptor-like (631 aa).

Positions Met1–Ala27 are cleaved as a signal peptide. Residues Gly28–Asn353 lie on the Extracellular side of the membrane. One can recognise a VWFA domain in the interval Asp76–Leu246. Positions 84, 86, and 150 each coordinate a divalent metal cation. Residues Trp354–Leu374 traverse the membrane as a helical segment. The Cytoplasmic segment spans residues Cys375–Phe631. A disordered region spans residues Glu382–Pro413. Basic and acidic residues predominate over residues Lys388 to Lys397. Pro residues predominate over residues Pro398–Pro413.

Belongs to the ATR family.

The protein localises to the membrane. This Homo sapiens (Human) protein is Anthrax toxin receptor-like (ANTXRL).